We begin with the raw amino-acid sequence, 665 residues long: Envelope glycoprotein (665 aa).

Residues 1–31 (MESTTLSKPFKNQVNPWGPLIVLLILGRVNP) form the signal peptide. The segment at 32–267 (VALGNSPHQV…KITDSGPRVP (236 aa)) is receptor-binding domain (RBD). The Extracellular portion of the chain corresponds to 32–605 (VALGNSPHQV…FNGSPWFTTL (574 aa)). Residue Asn43 is glycosylated (N-linked (GlcNAc...) asparagine; by host). 5 disulfide bridges follow: Cys77–Cys129, Cys103–Cys118, Cys104–Cys114, Cys152–Cys172, and Cys164–Cys177. Position 117 (Asp117) interacts with Zn(2+). Residues Asn199 and Asn211 are each glycosylated (N-linked (GlcNAc...) asparagine; by host). Cys209 and Cys215 are disulfide-bonded. The disordered stretch occupies residues 266 to 307 (VPIGPNPVLSDQRPPSQPRSPPHSNSTPTETPLTLPEPPPAG). N-linked (GlcNAc...) asparagine; by host glycosylation occurs at Asn324. 6 cysteine pairs are disulfide-bonded: Cys334–Cys337, Cys334–Cys558, Cys364–Cys418, Cys383–Cys395, Cys425–Cys438, and Cys550–Cys557. The CXXC signature appears at 334 to 337 (CWLC). N-linked (GlcNAc...) asparagine; by host glycans are attached at residues Asn356 and Asn363. Asn396, Asn400, and Asn432 each carry an N-linked (GlcNAc...) asparagine; by host glycan. The interval 470–490 (VSLTLALLLGGLTMGGIAAGV) is fusion peptide. A coiled-coil region spans residues 505–532 (AAVHDDLKEVEKSITNLEKSLTSLSEVV). Residues 533 to 549 (LQNRRGLDLLFLKEGGL) form an immunosuppression region. Positions 550-558 (CAALKEECC) match the CX6CC motif. The helical transmembrane segment at 606–626 (ISTIMGPLIVLLLILLLGPCI) threads the bilayer. Cys625 carries S-palmitoyl cysteine; by host lipidation. Residues 627 to 665 (LNRLVQFVKDRISVVQALVLTQQYHQLKSIDPEEMESRE) are Cytoplasmic-facing. Residues 650–653 (YHQL) carry the YXXL motif; contains endocytosis signal motif.

The mature envelope protein (Env) consists of a trimer of SU-TM heterodimers attached by a labile interchain disulfide bond. Post-translationally, specific enzymatic cleavages in vivo yield mature proteins. Envelope glycoproteins are synthesized as an inactive precursor that is N-glycosylated and processed likely by host cell furin or by a furin-like protease in the Golgi to yield the mature SU and TM proteins. The cleavage site between SU and TM requires the minimal sequence [KR]-X-[KR]-R. The R-peptide is released from the C-terminus of the cytoplasmic tail of the TM protein upon particle formation as a result of proteolytic cleavage by the viral protease. Cleavage of this peptide is required for TM to become fusogenic. The CXXC motif is highly conserved across a broad range of retroviral envelope proteins. It is thought to participate in the formation of a labile disulfide bond possibly with the CX6CC motif present in the transmembrane protein. Isomerization of the intersubunit disulfide bond to an SU intrachain disulfide bond is thought to occur upon receptor recognition in order to allow membrane fusion. In terms of processing, the transmembrane protein is palmitoylated. Post-translationally, the R-peptide is palmitoylated.

The protein resides in the virion membrane. The protein localises to the host cell membrane. In terms of biological role, the surface protein (SU) attaches the virus to the host cell by binding to its receptor. This interaction triggers the refolding of the transmembrane protein (TM) and is thought to activate its fusogenic potential by unmasking its fusion peptide. Fusion occurs at the host cell plasma membrane. Its function is as follows. The transmembrane protein (TM) acts as a class I viral fusion protein. Under the current model, the protein has at least 3 conformational states: pre-fusion native state, pre-hairpin intermediate state, and post-fusion hairpin state. During viral and target cell membrane fusion, the coiled coil regions (heptad repeats) assume a trimer-of-hairpins structure, positioning the fusion peptide in close proximity to the C-terminal region of the ectodomain. The formation of this structure appears to drive apposition and subsequent fusion of viral and target cell membranes. Membranes fusion leads to delivery of the nucleocapsid into the cytoplasm. The polypeptide is Envelope glycoprotein (env) (Mus musculus (Mouse)).